The following is a 309-amino-acid chain: Olfactory receptor 5AC2 (309 aa).

Over 1–27 the chain is Extracellular; it reads MDISEGNKTLVTEFVLTGLTDRPWLHV. N-linked (GlcNAc...) asparagine glycosylation occurs at asparagine 7. Residues 28–48 form a helical membrane-spanning segment; the sequence is LFFVVFLVVYLITMVGNLGLI. Over 49 to 56 the chain is Cytoplasmic; that stretch reads VLIWNDPH. A helical transmembrane segment spans residues 57 to 77; sequence LHMPMYLFLGGLAFSDACTST. Residues 78-101 lie on the Extracellular side of the membrane; that stretch reads SITPRMLVNFLDKTAMISLAECIT. Cysteines 99 and 191 form a disulfide. The chain crosses the membrane as a helical span at residues 102–122; sequence QFYFFASSATTECFLLVMMAY. At 123–135 the chain is on the cytoplasmic side; sequence DRYVAICNPLLYP. A helical transmembrane segment spans residues 136-156; the sequence is VMMSNKLSAQLLSISYVIGFL. Residues 157-198 lie on the Extracellular side of the membrane; it reads HPLVHVSLLLRLTFCRFNIIHYFYCEILQLFKISCNGPSINA. A helical transmembrane segment spans residues 199–219; sequence LMIFIFGAFIQIPTLMTIIIS. The Cytoplasmic portion of the chain corresponds to 220–239; sequence YTRVLFDILKKKSEKGRSKA. The helical transmembrane segment at 240 to 260 threads the bilayer; the sequence is FSTCGAHLLSVSLYYGTLIFM. The Extracellular portion of the chain corresponds to 261 to 273; sequence YVRPASGLAEDQD. A helical transmembrane segment spans residues 274 to 294; sequence KVYSLFYTIIIPLLNPFIYSL. At 295–309 the chain is on the cytoplasmic side; sequence RNKKVMHALRRVIRK.

It belongs to the G-protein coupled receptor 1 family.

The protein localises to the cell membrane. Odorant receptor. The sequence is that of Olfactory receptor 5AC2 (OR5AC2) from Homo sapiens (Human).